Here is a 255-residue protein sequence, read N- to C-terminus: UPF0246 protein Caul_4480 (255 aa).

The protein belongs to the UPF0246 family.

This chain is UPF0246 protein Caul_4480, found in Caulobacter sp. (strain K31).